The chain runs to 146 residues: Basic phospholipase A2 (146 aa).

The N-terminal stretch at 1 to 21 (MNPAHLLVLAAVCVSLLGASS) is a signal peptide. Residues 22–27 (VPPRPL) constitute a propeptide that is removed on maturation. 7 disulfide bridges follow: cysteine 38-cysteine 97, cysteine 52-cysteine 145, cysteine 54-cysteine 70, cysteine 69-cysteine 127, cysteine 76-cysteine 120, cysteine 86-cysteine 113, and cysteine 106-cysteine 118. Ca(2+) is bound by residues tyrosine 53, glycine 55, and glycine 57. Histidine 73 is an active-site residue. Residue aspartate 74 coordinates Ca(2+). Asparagine 109 is a glycosylation site (N-linked (GlcNAc...) asparagine). Residue aspartate 121 is part of the active site.

This sequence belongs to the phospholipase A2 family. Group I subfamily. D49 sub-subfamily. Ca(2+) serves as cofactor. Expressed by the venom gland.

Its subcellular location is the secreted. The enzyme catalyses a 1,2-diacyl-sn-glycero-3-phosphocholine + H2O = a 1-acyl-sn-glycero-3-phosphocholine + a fatty acid + H(+). Its function is as follows. PLA2 catalyzes the calcium-dependent hydrolysis of the 2-acyl groups in 3-sn-phosphoglycerides. The protein is Basic phospholipase A2 of Micrurus corallinus (Brazilian coral snake).